A 329-amino-acid chain; its full sequence is BTB/POZ domain-containing protein At1g55760 (329 aa).

Residues 164-231 (TDITINASDG…IYGNIQNEDF (68 aa)) form the BTB domain.

The protein operates within protein modification; protein ubiquitination. May act as a substrate-specific adapter of an E3 ubiquitin-protein ligase complex (CUL3-RBX1-BTB) which mediates the ubiquitination and subsequent proteasomal degradation of target proteins. The sequence is that of BTB/POZ domain-containing protein At1g55760 from Arabidopsis thaliana (Mouse-ear cress).